Reading from the N-terminus, the 437-residue chain is Eukaryotic peptide chain release factor subunit 1 (437 aa).

An NIKS motif; plays an important role in translational termination motif is present at residues 61 to 64; it reads NIKS.

Belongs to the eukaryotic release factor 1 family. In terms of assembly, component of the eRF1-eRF3-GTP ternary complex, composed of ETF1/ERF1 and eRF3 (GSPT1/ERF3A or GSPT2/ERF3B) and GTP.

The protein resides in the cytoplasm. In terms of biological role, component of the eRF1-eRF3-GTP ternary complex, a ternary complex that mediates translation termination in response to the termination codons. The eRF1-eRF3-GTP complex binds to a stop codon in the ribosomal A-site. ETF1/ERF1 is responsible for stop codon recognition and inducing hydrolysis of peptidyl-tRNA. Following GTP hydrolysis, eRF3 (GSPT1/ERF3A or GSPT2/ERF3B) dissociates, permitting ETF1/eRF1 to accommodate fully in the A-site, followed by hydrolysis of peptidyl-tRNA. In Xenopus laevis (African clawed frog), this protein is Eukaryotic peptide chain release factor subunit 1 (etf1).